We begin with the raw amino-acid sequence, 346 residues long: N(4)-(beta-N-acetylglucosaminyl)-L-asparaginase (346 aa).

Positions 1–23 (MARKSNLPVLLVPFLLCQALVRC) are cleaved as a signal peptide. At serine 24 the chain carries Blocked amino end (Ser). A glycan (N-linked (GlcNAc...) asparagine) is linked at asparagine 38. 2 cysteine pairs are disulfide-bonded: cysteine 64–cysteine 69 and cysteine 163–cysteine 179. The active-site Nucleophile is threonine 206. Residues 234–237 (RVGD) and 257–260 (TGNG) each bind substrate. Residues cysteine 286 and cysteine 306 are joined by a disulfide bond. The N-linked (GlcNAc...) asparagine glycan is linked to asparagine 308. Cysteine 317 and cysteine 345 are disulfide-bonded.

Belongs to the Ntn-hydrolase family. In terms of assembly, heterotetramer of two alpha and two beta chains arranged as a dimer of alpha/beta heterodimers. In terms of processing, cleaved into an alpha and beta chain by autocatalysis; this activates the enzyme. The N-terminal residue of the beta subunit is responsible for the nucleophile hydrolase activity. N-glycosylated.

Its subcellular location is the lysosome. The enzyme catalyses N(4)-(beta-N-acetyl-D-glucosaminyl)-L-asparagine + H2O = N-acetyl-beta-D-glucosaminylamine + L-aspartate + H(+). Cleaves the GlcNAc-Asn bond which joins oligosaccharides to the peptide of asparagine-linked glycoproteins. The protein is N(4)-(beta-N-acetylglucosaminyl)-L-asparaginase (AGA) of Homo sapiens (Human).